The following is a 534-amino-acid chain: Protoheme IX farnesyltransferase (534 aa).

The unknown stretch occupies residues 1–251 (MRREHARAIL…VLLEGKPSLL (251 aa)). 15 helical membrane-spanning segments follow: residues 17-37 (PWLL…GGIV), 39-59 (ALTG…ALAI), 83-103 (YLTL…FGAI), 128-148 (LALA…ALAV), 163-183 (VAWA…QVLL), 197-217 (LMHL…TTLA), 261-281 (GVIS…PAGI), 284-304 (LSLV…SHSI), 339-359 (IALG…LAAI), 360-380 (LALA…KRTS), 384-404 (IVIG…AVTG), 411-431 (LLLW…LALI), 457-477 (IVIY…LGML), 479-499 (WAYL…ALKL), and 508-528 (AWAL…AMAV). The protoheme IX prenyltransferase stretch occupies residues 252–530 (KDYISLTKPG…ILFVAMAVDR (279 aa)).

The protein in the C-terminal section; belongs to the UbiA prenyltransferase family. Protoheme IX farnesyltransferase subfamily.

The protein resides in the cell membrane. It catalyses the reaction heme b + (2E,6E)-farnesyl diphosphate + H2O = Fe(II)-heme o + diphosphate. The protein operates within porphyrin-containing compound metabolism; heme O biosynthesis; heme O from protoheme: step 1/1. In terms of biological role, converts heme B (protoheme IX) to heme O by substitution of the vinyl group on carbon 2 of heme B porphyrin ring with a hydroxyethyl farnesyl side group. The chain is Protoheme IX farnesyltransferase (ctaB) from Roseiflexus sp. (strain RS-1).